Here is a 175-residue protein sequence, read N- to C-terminus: Ribulose bisphosphate carboxylase small subunit, chloroplastic 2 (175 aa).

The N-terminal 46 residues, 1-46, are a transit peptide targeting the chloroplast; that stretch reads MAPAVMASSATTVAPFQGLKSTAGLPISCRSGSTGLSSVSNGGRIR.

Belongs to the RuBisCO small chain family. In terms of assembly, heterohexadecamer of 8 large and 8 small subunits.

It is found in the plastid. The protein localises to the chloroplast. RuBisCO catalyzes two reactions: the carboxylation of D-ribulose 1,5-bisphosphate, the primary event in carbon dioxide fixation, as well as the oxidative fragmentation of the pentose substrate. Both reactions occur simultaneously and in competition at the same active site. Although the small subunit is not catalytic it is essential for maximal activity. This Triticum aestivum (Wheat) protein is Ribulose bisphosphate carboxylase small subunit, chloroplastic 2.